The following is a 355-amino-acid chain: Peptide chain release factor 1 (355 aa).

Position 231 is an N5-methylglutamine (Q231). Residues 280–293 show a composition bias toward basic and acidic residues; the sequence is KERKAKEQSERKDQ. The disordered stretch occupies residues 280–307; sequence KERKAKEQSERKDQVGTGDRSGRIRTYN.

This sequence belongs to the prokaryotic/mitochondrial release factor family. In terms of processing, methylated by PrmC. Methylation increases the termination efficiency of RF1.

The protein resides in the cytoplasm. Its function is as follows. Peptide chain release factor 1 directs the termination of translation in response to the peptide chain termination codons UAG and UAA. This is Peptide chain release factor 1 from Campylobacter hominis (strain ATCC BAA-381 / DSM 21671 / CCUG 45161 / LMG 19568 / NCTC 13146 / CH001A).